Here is a 547-residue protein sequence, read N- to C-terminus: Chaperonin GroEL (547 aa).

Residues threonine 30–proline 33, lysine 51, aspartate 87–threonine 91, glycine 415, and aspartate 495 each bind ATP. The interval lysine 526–phenylalanine 547 is disordered. The span at alanine 530–phenylalanine 547 shows a compositional bias: gly residues.

Belongs to the chaperonin (HSP60) family. Forms a cylinder of 14 subunits composed of two heptameric rings stacked back-to-back. Interacts with the co-chaperonin GroES.

Its subcellular location is the cytoplasm. It catalyses the reaction ATP + H2O + a folded polypeptide = ADP + phosphate + an unfolded polypeptide.. Its function is as follows. Together with its co-chaperonin GroES, plays an essential role in assisting protein folding. The GroEL-GroES system forms a nano-cage that allows encapsulation of the non-native substrate proteins and provides a physical environment optimized to promote and accelerate protein folding. The chain is Chaperonin GroEL from Hyphomonas neptunium (strain ATCC 15444).